Consider the following 547-residue polypeptide: Putative cysteine ligase BshC (547 aa).

Residues Asn462 to His484 adopt a coiled-coil conformation.

Belongs to the BshC family.

Involved in bacillithiol (BSH) biosynthesis. May catalyze the last step of the pathway, the addition of cysteine to glucosamine malate (GlcN-Mal) to generate BSH. The chain is Putative cysteine ligase BshC from Heliobacterium modesticaldum (strain ATCC 51547 / Ice1).